Consider the following 293-residue polypeptide: Probable tRNA-splicing endonuclease subunit Sen2 (293 aa).

Residues tyrosine 157, histidine 165, and lysine 204 contribute to the active site. Residues 267–287 form a helical membrane-spanning segment; that stretch reads VVFNHWGVILGFTVLSGLLVY.

Belongs to the tRNA-intron endonuclease family. In terms of assembly, tRNA splicing endonuclease is a heterotetramer composed of SEN2, SEN15, SEN34/LENG5 and SEN54.

It localises to the nucleus. Its subcellular location is the membrane. It catalyses the reaction pretRNA = a 3'-half-tRNA molecule with a 5'-OH end + a 5'-half-tRNA molecule with a 2',3'-cyclic phosphate end + an intron with a 2',3'-cyclic phosphate and a 5'-hydroxyl terminus.. In terms of biological role, constitutes one of the two catalytic subunit of the tRNA-splicing endonuclease complex, a complex responsible for identification and cleavage of the splice sites in pre-tRNA. It cleaves pre-tRNA at the 5'- and 3'-splice sites to release the intron. The products are an intron and two tRNA half-molecules bearing 2',3'-cyclic phosphate and 5'-OH termini. There are no conserved sequences at the splice sites, but the intron is invariably located at the same site in the gene, placing the splice sites an invariant distance from the constant structural features of the tRNA body. Probably carries the active site for 5'-splice site cleavage. This is Probable tRNA-splicing endonuclease subunit Sen2 from Oryza sativa subsp. japonica (Rice).